A 222-amino-acid chain; its full sequence is Apoptosis regulator OPG045 (222 aa).

The protein belongs to the orthopoxvirus OPG045 family. Homodimer. Interacts with host pro-apoptotic protein BCL2L11 (via BH3 domain). Interacts with host NLRP1. Interacts with host BAK.

The protein localises to the host mitochondrion outer membrane. The protein resides in the host cytoplasm. Functionally, plays a role in evading host innate immune response by inhibiting host inflammasome activation. Interacts with and inhibits NLR-mediated interleukin-1 beta/IL1B production in infected cells. At the host mitochondria outer membrane, interacts with the BH3 domain of host BAK and prevents BAK from binding active BAX. In turn, host apoptosis is inhibited. The protein is Apoptosis regulator OPG045 (OPG045) of Homo sapiens (Human).